Consider the following 414-residue polypeptide: DNA polymerase IV (414 aa).

The 182-residue stretch at 8 to 189 (IFHIDMNSFY…LPIEEMHGIG (182 aa)) folds into the UmuC domain. Positions 12 and 108 each coordinate Mg(2+). Residue Glu109 is part of the active site. Positions 394-414 (EESKTRGTSFNRDFFQDEKKR) are disordered.

This sequence belongs to the DNA polymerase type-Y family. Monomer. Requires Mg(2+) as cofactor.

Its subcellular location is the cytoplasm. It carries out the reaction DNA(n) + a 2'-deoxyribonucleoside 5'-triphosphate = DNA(n+1) + diphosphate. Functionally, poorly processive, error-prone DNA polymerase involved in untargeted mutagenesis. Copies undamaged DNA at stalled replication forks, which arise in vivo from mismatched or misaligned primer ends. These misaligned primers can be extended by PolIV. Exhibits no 3'-5' exonuclease (proofreading) activity. May be involved in translesional synthesis, in conjunction with the beta clamp from PolIII. The polypeptide is DNA polymerase IV (Bacillus velezensis (strain DSM 23117 / BGSC 10A6 / LMG 26770 / FZB42) (Bacillus amyloliquefaciens subsp. plantarum)).